The primary structure comprises 362 residues: MTDAGKRILVMAGGTGGHVFPALAVAKYLAQQGWQVRWLGTADRMEARLVPQYGFDIDFIDIKGVRGNGLVRKLAAPFKVVRSILQAKAVIAEFKPDVVLGMGGFASGPGGVAAKLAGVPLVLHEQNAIPGMTNKLLSRIANQVLCAFKNTFTQVKAKVVGNPIRRELIALGAEPKQAADDALKVLVVGGSLGAKVFNDLMPEVVAALSKQQSITVWHQVGKDNLTGVKSAYQQQGQEGGVNVAEFIDDMEAAYRWADVVLCRAGALTVSELAAVGLPSILVPYPHAVDDHQTRNAQVLVEAGAAFLLPQAILDVNKLVSKLQLLANDRAELAQMGQRARDVAVLDATEQVAQVCIALAEKG.

UDP-N-acetyl-alpha-D-glucosamine is bound by residues 15–17, Asn-127, Arg-165, Ser-191, Ile-247, 266–271, and Gln-292; these read TGG and ALTVSE.

Belongs to the glycosyltransferase 28 family. MurG subfamily.

The protein localises to the cell inner membrane. It carries out the reaction di-trans,octa-cis-undecaprenyl diphospho-N-acetyl-alpha-D-muramoyl-L-alanyl-D-glutamyl-meso-2,6-diaminopimeloyl-D-alanyl-D-alanine + UDP-N-acetyl-alpha-D-glucosamine = di-trans,octa-cis-undecaprenyl diphospho-[N-acetyl-alpha-D-glucosaminyl-(1-&gt;4)]-N-acetyl-alpha-D-muramoyl-L-alanyl-D-glutamyl-meso-2,6-diaminopimeloyl-D-alanyl-D-alanine + UDP + H(+). Its pathway is cell wall biogenesis; peptidoglycan biosynthesis. Its function is as follows. Cell wall formation. Catalyzes the transfer of a GlcNAc subunit on undecaprenyl-pyrophosphoryl-MurNAc-pentapeptide (lipid intermediate I) to form undecaprenyl-pyrophosphoryl-MurNAc-(pentapeptide)GlcNAc (lipid intermediate II). The polypeptide is UDP-N-acetylglucosamine--N-acetylmuramyl-(pentapeptide) pyrophosphoryl-undecaprenol N-acetylglucosamine transferase (Shewanella sp. (strain ANA-3)).